The primary structure comprises 524 residues: Calcium-dependent protein kinase 1 (524 aa).

A disordered region spans residues Met-1–Ser-34. Gly-2 carries the N-myristoyl glycine lipid modification. Cys-3 carries the S-palmitoyl cysteine lipid modification. Positions Lys-10–Thr-20 match the Basic cluster involved in membrane binding motif. Residues Ser-17, Ser-28, and Ser-34 each carry the phosphoserine; by autocatalysis modification. Low complexity predominate over residues Asn-21–Lys-32. Residues Tyr-56 to Ile-325 form the Protein kinase domain. Residues Leu-62–Val-70 and Lys-85 each bind ATP. Ser-64 bears the Phosphoserine; by PKG; by autocatalysis mark. The residue at position 100 (Thr-100) is a Phosphothreonine; by autocatalysis. A Phosphoserine; by autocatalysis modification is found at Ser-118. Asp-191 acts as the Proton acceptor in catalysis. The residue at position 217 (Ser-217) is a Phosphoserine. Residue Ser-220 is modified to Phosphoserine; by autocatalysis. Residue Thr-231 is modified to Phosphothreonine; by PKG; by autocatalysis. Residue Ser-335 is modified to Phosphoserine; by autocatalysis. Positions Asn-346–Ser-353 match the J domain autoinhibitory motif motif. The tract at residues Asn-346 to Ile-364 is j domain. The J domain interacts with the EF-hand domains signature appears at Gln-354–Ile-364. 4 EF-hand domains span residues Glu-372–Phe-407, Asn-416–Leu-451, Phe-452–Ser-487, and Glu-488–Asn-521. The Ca(2+) site is built by Asp-385, Asn-387, Asp-389, Gln-391, Glu-396, Asp-429, Asp-431, Asn-433, Tyr-435, Glu-440, Asp-465, Asp-467, Ser-469, Lys-471, Glu-476, Asp-499, Asn-501, Asp-503, Met-505, and Glu-510.

Belongs to the protein kinase superfamily. Ser/Thr protein kinase family. CDPK subfamily. In terms of assembly, monomer. Forms a high molecular weight (250 and 400 kDa) complex. Forms a complex composed of CDPK1, PKA regulatory subunit PKAr and 14-3-3I; the complex is formed in merozoites in response to low extracellular level of K(+) and may play a role in microneme secretion. Interacts (when phosphorylated) with 14-3-3I in a Ca(2+)-independent manner; the interaction does not regulate CDPK1 catalytic activity but is required for merozoite invasion of host erythrocytes. Interacts with PKA regulatory subunit PKAr; in a Ca(2+)-dependent manner. Interacts with SERA5 p50 in the late schizont stage. Interacts with inner membrane complex protein IMC1g in late schizonts. Interacts with rhoptry protein RhopH3 in merozoites. The cofactor is Mg(2+). Myristoylated. Myristoylation, palmitoylation and the basic cluster motif are required for the localization to the parasitophorous vacuole membrane. In terms of processing, palmitoylated. Palmitoylation increases in merozoites in response to low level of extracellular K(+) in the host blood. Myristoylation, palmitoylation and the basic cluster motif are required for the localization to the parasitophorous vacuole membrane. Post-translationally, phosphorylation at Ser-64 occurs at late schizont stage and regulates CDPK1 protein-protein interaction. Phosphorylated at Ser-28, Ser-34 and Ser-64 in merozoites in response to low extracellular level of K(+). Phosphorylation at Thr-231 may regulate CDPK1 kinase activity. Phosphorylation increases in response to an increase in intracellular Ca(2+) levels. Autophosphorylated in vitro. Autophosphorylation does not affect membrane localization in vitro.

It localises to the membrane. The protein localises to the cell membrane. Its subcellular location is the parasitophorous vacuole membrane. It is found in the cytoplasm. The protein resides in the cell projection. It localises to the cilium. The protein localises to the flagellum. Its subcellular location is the host cell membrane. The enzyme catalyses L-seryl-[protein] + ATP = O-phospho-L-seryl-[protein] + ADP + H(+). It carries out the reaction L-threonyl-[protein] + ATP = O-phospho-L-threonyl-[protein] + ADP + H(+). With respect to regulation, activated by calcium. Upon calcium binding to the EF-hand domains, the C-terminus of the junction domain (J domain) undergoes a conformational change which results in the dissociation of the pseudo-substrate inhibitory motif from the catalytic domain. This, in turn may facilitate the autophosphorylation of the activation loop at Thr-231, which leads to the kinase activation. May be negatively regulated by PKA-mediated phosphorylation. Inhibited by purfalcamine. Its function is as follows. Calcium-dependent protein kinase which acts as a sensor and effector of intracellular Ca(2+) levels probably in part downstream of cGMP-activated PKG kinase. By phosphorylating various proteins, required for microneme secretion and thus merozoite egress from and invasion of host erythrocytes. During gametogenesis, essential for the development of both male and female gametes. Phosphorylates SERA5 p50 which enhances SERA5 p50 protease activity; however, SERA5 p50 protease activity has been shown in other studies to be controversial. Probably by phosphorylating SERA5 p50, plays a role in merozoite egress from host erythrocytes. Probably prior or during merozoite invasion of host erythrocytes, phosphorylates rhoptry protein RhopH3 which is required for RhopH3 localization to rhoptries and for its secretion. Probably in late schizonts, phosphorylates myosin A tail domain-interacting protein MTIP and glideosome-associated protein 45 GAP45, both of which are components of the motor complex that generates the force required by the parasite to invade host cells. In late schizonts, phosphorylates inner membrane complex protein IMC1g. In late schizonts, phosphorylates PKA regulatory subunit PKAr in a calcium-dependent manner, which may contribute to the dissociation of regulatory PKAr and catalytic PKAc subunits and promote the activation of PKAc. May phosphorylate raf kinase inhibitory protein RKIP which in turn may regulate CDPK1 catalytic activity. May phosphorylate proteins of the host erythrocyte membranes. This is Calcium-dependent protein kinase 1 from Plasmodium falciparum (isolate 3D7).